Reading from the N-terminus, the 135-residue chain is ATP synthase epsilon chain (135 aa).

It belongs to the ATPase epsilon chain family. In terms of assembly, F-type ATPases have 2 components, CF(1) - the catalytic core - and CF(0) - the membrane proton channel. CF(1) has five subunits: alpha(3), beta(3), gamma(1), delta(1), epsilon(1). CF(0) has three main subunits: a, b and c.

Its subcellular location is the cell inner membrane. Produces ATP from ADP in the presence of a proton gradient across the membrane. The polypeptide is ATP synthase epsilon chain (Rhodopseudomonas palustris (strain BisA53)).